The primary structure comprises 259 residues: Type III pantothenate kinase (259 aa).

Residue Asp6–Thr13 participates in ATP binding. Gly107–Arg110 is a substrate binding site. Residue Asp109 is the Proton acceptor of the active site. Asp129 contacts K(+). Thr132 serves as a coordination point for ATP. Position 184 (Thr184) interacts with substrate.

This sequence belongs to the type III pantothenate kinase family. As to quaternary structure, homodimer. It depends on NH4(+) as a cofactor. K(+) serves as cofactor.

It is found in the cytoplasm. It catalyses the reaction (R)-pantothenate + ATP = (R)-4'-phosphopantothenate + ADP + H(+). It functions in the pathway cofactor biosynthesis; coenzyme A biosynthesis; CoA from (R)-pantothenate: step 1/5. Catalyzes the phosphorylation of pantothenate (Pan), the first step in CoA biosynthesis. This Listeria innocua serovar 6a (strain ATCC BAA-680 / CLIP 11262) protein is Type III pantothenate kinase.